A 519-amino-acid polypeptide reads, in one-letter code: MSDLFEDPAPSRNTPEFTVSELSGAVKRVIEGEFGLVRVRGEIGRVSRPASGHLYFDLKDDRAVMAAICWKGQAGRLSVRPEEGMEVVATGRMTTFPGQSKYQIIVEDMAPAGAGALMAMLEKRRAALAAEGLFDAGRKRPLPFLPRVIGVVTSPSGAVIRDILHRLRDRFPSHVLIWPVAVQGEKCAPEVAAAIRGFNTLPEGGPIPRPDLLIVARGGGSLEDLWGFNEEIVVRAAAESRIPLISAVGHETDTTLIDHAADRRAPTPTAAAEMAVPVRLELLAGLDGQGARLSRCAAETIRRRDQRLRDLARALPRLESLVAGPSQRFDLWSGRLSGALGQSVAARRARLEPLGAHLRPRLLADLVARQKDRLGDRTRSLETCLGRRAERARDRFDALSARLAPAFARLIAETERASRRDAATLGTLAARLDAAPEARLARLSDRLEALDRLRQTLGYRETLKRGYAVVRADGAVLTTKAEAGAAAMLEIEFQDGRLSVGRGKTRKPKEEPPAQGSLL.

The tract at residues 500 to 519 is disordered; the sequence is VGRGKTRKPKEEPPAQGSLL.

It belongs to the XseA family. In terms of assembly, heterooligomer composed of large and small subunits.

It localises to the cytoplasm. It carries out the reaction Exonucleolytic cleavage in either 5'- to 3'- or 3'- to 5'-direction to yield nucleoside 5'-phosphates.. In terms of biological role, bidirectionally degrades single-stranded DNA into large acid-insoluble oligonucleotides, which are then degraded further into small acid-soluble oligonucleotides. The chain is Exodeoxyribonuclease 7 large subunit from Cereibacter sphaeroides (strain ATCC 17029 / ATH 2.4.9) (Rhodobacter sphaeroides).